A 167-amino-acid polypeptide reads, in one-letter code: Small ribosomal subunit protein uS5 (167 aa).

The region spanning 12 to 75 (LQEKLIAVNR…EKARRNMTTI (64 aa)) is the S5 DRBM domain.

It belongs to the universal ribosomal protein uS5 family. As to quaternary structure, part of the 30S ribosomal subunit. Contacts proteins S4 and S8.

In terms of biological role, with S4 and S12 plays an important role in translational accuracy. Functionally, located at the back of the 30S subunit body where it stabilizes the conformation of the head with respect to the body. The polypeptide is Small ribosomal subunit protein uS5 (Vibrio parahaemolyticus serotype O3:K6 (strain RIMD 2210633)).